A 163-amino-acid chain; its full sequence is MVGGGGSGGGLLENANPLIYERSGERPVTAGEEDEEVPDSIDAREIFDLIRSINDPEHPLTLEELNVVEQVRIQVSDPESTVAVAFTPTIPHCSMATLIGLSIKVKLLRSLPQRFKMDVHITPGTHASEHAVNKQLADKERVAAALENTHLLEVVNQCLSARS.

Belongs to the MIP18 family. Component of the CIA complex. Component of the MMXD complex, which includes CIAO1, ERCC2, CIAO2B, MMS19 and SLC25A5. Interacts with CIAO1, ERCC2 and MMS19; the interactions are direct. Interacts with KIF4A; the interaction facilitates the transfer of Fe-S clusters to KIF4A to ensure proper localization of KIF4A to the mitotic machinery. Interacts with CCDC117; the interaction is direct.

Its subcellular location is the nucleus. The protein localises to the cytoplasm. It is found in the cytoskeleton. It localises to the spindle. In terms of biological role, component of the cytosolic iron-sulfur protein assembly (CIA) complex, a multiprotein complex that mediates the incorporation of iron-sulfur cluster into extramitochondrial Fe/S proteins. As a CIA complex component and in collaboration with CIAO1 and MMS19, binds to and facilitates the assembly of most cytosolic-nuclear Fe/S proteins. As part of the mitotic spindle-associated MMXD complex it plays a role in chromosome segregation, probably by facilitating iron-sulfur cluster assembly into ERCC2/XPD. Together with MMS19, facilitates the transfer of Fe-S clusters to the motor protein KIF4A, which ensures proper localization of KIF4A to mitotic machinery components to promote the progression of mitosis. In Mus musculus (Mouse), this protein is Cytosolic iron-sulfur assembly component 2B.